Consider the following 381-residue polypeptide: tRNA-specific 2-thiouridylase MnmA (381 aa).

ATP is bound by residues 9 to 16 (GMSGGVDS) and M35. Residues 95–97 (NPD) form an interaction with target base in tRNA region. Catalysis depends on C100, which acts as the Nucleophile. C100 and C196 form a disulfide bridge. Residue G124 participates in ATP binding. The interval 146 to 148 (KDQ) is interaction with tRNA. The active-site Cysteine persulfide intermediate is C196. An interaction with tRNA region spans residues 308–309 (RY).

This sequence belongs to the MnmA/TRMU family.

The protein localises to the cytoplasm. The catalysed reaction is S-sulfanyl-L-cysteinyl-[protein] + uridine(34) in tRNA + AH2 + ATP = 2-thiouridine(34) in tRNA + L-cysteinyl-[protein] + A + AMP + diphosphate + H(+). Its function is as follows. Catalyzes the 2-thiolation of uridine at the wobble position (U34) of tRNA, leading to the formation of s(2)U34. The protein is tRNA-specific 2-thiouridylase MnmA of Burkholderia multivorans (strain ATCC 17616 / 249).